The sequence spans 404 residues: Probable tRNA sulfurtransferase (404 aa).

Residues 60–165 enclose the THUMP domain; sequence QPVAESLKQI…EEAAYISYET (106 aa). ATP is bound by residues 183 to 184, 208 to 209, arginine 265, glycine 287, and glutamine 296; these read ML and HF.

Belongs to the ThiI family.

It localises to the cytoplasm. It carries out the reaction [ThiI sulfur-carrier protein]-S-sulfanyl-L-cysteine + a uridine in tRNA + 2 reduced [2Fe-2S]-[ferredoxin] + ATP + H(+) = [ThiI sulfur-carrier protein]-L-cysteine + a 4-thiouridine in tRNA + 2 oxidized [2Fe-2S]-[ferredoxin] + AMP + diphosphate. It catalyses the reaction [ThiS sulfur-carrier protein]-C-terminal Gly-Gly-AMP + S-sulfanyl-L-cysteinyl-[cysteine desulfurase] + AH2 = [ThiS sulfur-carrier protein]-C-terminal-Gly-aminoethanethioate + L-cysteinyl-[cysteine desulfurase] + A + AMP + 2 H(+). Its pathway is cofactor biosynthesis; thiamine diphosphate biosynthesis. Catalyzes the ATP-dependent transfer of a sulfur to tRNA to produce 4-thiouridine in position 8 of tRNAs, which functions as a near-UV photosensor. Also catalyzes the transfer of sulfur to the sulfur carrier protein ThiS, forming ThiS-thiocarboxylate. This is a step in the synthesis of thiazole, in the thiamine biosynthesis pathway. The sulfur is donated as persulfide by IscS. This chain is Probable tRNA sulfurtransferase, found in Streptococcus gordonii (strain Challis / ATCC 35105 / BCRC 15272 / CH1 / DL1 / V288).